The chain runs to 422 residues: Histidine--tRNA ligase (422 aa).

The protein belongs to the class-II aminoacyl-tRNA synthetase family. In terms of assembly, homodimer.

The protein localises to the cytoplasm. The catalysed reaction is tRNA(His) + L-histidine + ATP = L-histidyl-tRNA(His) + AMP + diphosphate + H(+). The polypeptide is Histidine--tRNA ligase (Syntrophomonas wolfei subsp. wolfei (strain DSM 2245B / Goettingen)).